The following is a 77-amino-acid chain: uncharacterized protein (77 aa).

This is an uncharacterized protein from Vaccinia virus (strain Western Reserve) (VACV).